Reading from the N-terminus, the 500-residue chain is L-arabinose isomerase (500 aa).

Mn(2+)-binding residues include Glu306, Glu333, His350, and His450.

This sequence belongs to the arabinose isomerase family. As to quaternary structure, homohexamer. Requires Mn(2+) as cofactor.

The enzyme catalyses beta-L-arabinopyranose = L-ribulose. Its pathway is carbohydrate degradation; L-arabinose degradation via L-ribulose; D-xylulose 5-phosphate from L-arabinose (bacterial route): step 1/3. Catalyzes the conversion of L-arabinose to L-ribulose. This chain is L-arabinose isomerase, found in Klebsiella pneumoniae (strain 342).